We begin with the raw amino-acid sequence, 1481 residues long: Coiled-coil domain-containing protein 88B (1481 aa).

Coiled-coil stretches lie at residues 200–225 (ELVA…RERD) and 258–491 (SHHL…GSQH). Disordered regions lie at residues 430–458 (ELQR…QDEV), 494–731 (LEEQ…AIPE), and 1331–1481 (PRRE…SLSQ). Residue Ser441 is modified to Phosphoserine. Composition is skewed to polar residues over residues 542 to 557 (ASYS…SQAP) and 568 to 590 (QMVS…TVET). Ser649 bears the Phosphoserine mark. Over residues 660–695 (TLREPLKDQKALDRELELSKQQKETGRHEQRPKGLE) the composition is skewed to basic and acidic residues. Residues 731 to 1308 (EEQALRDEVA…KIMDQYRVLE (578 aa)) are a coiled coil. Residues Ser1353 and Ser1384 each carry the phosphoserine modification. A compositionally biased stretch (polar residues) spans 1371-1386 (TGSSSPAPMRRVQSSL). The segment covering 1453–1472 (LSEHEADDTREAFQEQKPEK) has biased composition (basic and acidic residues).

Belongs to the CCDC88 family. As to quaternary structure, homodimer. Interacts with DOCK8. Interacts (via C-terminus) with intact microtubules. Interacts with dynein-dynactin motor complex. Interacts (via C-terminus) with HSPA5. Abundantly expressed in immune cells, including both CD4(+) and CD8(+) T-cells and in myeloid cells (at protein level). Expressed in endothelium (at protein level). Expressed specifically in spleen, bone marrow, lymph nodes and thymus. Expressed in liver and heart.

Its subcellular location is the membrane. It is found in the cytoplasm. The protein resides in the cytoskeleton. It localises to the microtubule organizing center. The protein localises to the endoplasmic reticulum. Its subcellular location is the golgi apparatus. In terms of biological role, acts as a positive regulator of T-cell maturation and inflammatory function. Required for several functions of T-cells in both the CD4(+) and the CD8(+) compartments and this includes expression of cell surface markers of activation, proliferation, and cytokine production in response to specific or non-specific stimulation and during the course of infection with the mouse malaria parasite Plasmodium berghei. Enhances NK cell cytotoxicity by positively regulating polarization of microtubule-organizing center (MTOC) to cytotoxic synapse, lytic granule transport along microtubules, and dynein-mediated clustering to MTOC. Interacts with HSPA5 and stabilizes the interaction between HSPA5 and ERN1, leading to suppression of ERN1-induced JNK activation and endoplasmic reticulum stress-induced apoptosis. This chain is Coiled-coil domain-containing protein 88B (Ccdc88b), found in Mus musculus (Mouse).